Here is a 157-residue protein sequence, read N- to C-terminus: Nicotinate dehydrogenase subunit A (157 aa).

The 77-residue stretch at T3 to L79 folds into the 2Fe-2S ferredoxin-type domain. Residues C41, C46, C49, and C61 each coordinate [2Fe-2S] cluster.

[2Fe-2S] cluster serves as cofactor.

It catalyses the reaction 2 Fe(III)-[cytochrome] + nicotinate + H2O = 2 Fe(II)-[cytochrome] + 6-hydroxynicotinate + 2 H(+). It functions in the pathway cofactor degradation; nicotinate degradation. In terms of biological role, subunit of the two-component enzyme NicAB that mediates nicotinate hydroxylation, the first step in the aerobic nicotinate degradation pathway. Mediates conversion of nicotinate into 6-hydroxynicotinate (6HNA). The polypeptide is Nicotinate dehydrogenase subunit A (nicA) (Pseudomonas putida (strain ATCC 47054 / DSM 6125 / CFBP 8728 / NCIMB 11950 / KT2440)).